The sequence spans 309 residues: Probable cell wall protein PGA50 (309 aa).

The N-terminal stretch at 1 to 17 (MKLNLLLLLFIVELVAA) is a signal peptide. N-linked (GlcNAc...) asparagine glycans are attached at residues Asn67, Asn115, Asn248, Asn267, and Asn277. Positions 241 to 281 (STTTFSSNGTSSGTTNGDTRAETKSSNSTQTSSSDKNSSQI) are disordered. A lipid anchor (GPI-anchor amidated serine) is attached at Ser286. Residues 287 to 309 (TGVANFVASFGMGTLLLFVLSLC) constitute a propeptide, removed in mature form.

Belongs to the IHD1 family. Post-translationally, the GPI-anchor is attached to the protein in the endoplasmic reticulum and serves to target the protein to the cell surface. There, the glucosamine-inositol phospholipid moiety is cleaved off and the GPI-modified mannoprotein is covalently attached via its lipidless GPI glycan remnant to the 1,6-beta-glucan of the outer cell wall layer.

It is found in the secreted. Its subcellular location is the cell wall. The protein localises to the membrane. Its function is as follows. Probable GPI-anchored cell wall protein that may be involved in cell wall organization, hyphal growth, as well as in virulence. The sequence is that of Probable cell wall protein PGA50 (PGA50) from Candida albicans (strain SC5314 / ATCC MYA-2876) (Yeast).